A 53-amino-acid chain; its full sequence is HOXB-AS3 peptide (53 aa).

A disordered region spans residues 1–53 (MPVLPGTQRYPHQRRRFQAAGGGAESGKRGSEEAPGVAWSGSESGRDAATPAW).

In terms of assembly, interacts with HNRNPA1 (via the RGG-box). Interacts with IGF2BP2.

In terms of biological role, blocks the binding of HNRNPA1 to the intronic sequences flanking exon 9 of the PKM gene by competitively binding to the HNRNPA1 RGG-box motif. This inhibits inclusion of exon 9 and promotes inclusion of exon 10, suppressing formation of the PKM M2 isoform and promoting production of the M1 isoform. Also suppresses HNRNPA1-mediated processing of microRNA 18a (miR-18a). Promotes MYC stability through interaction with IGF2BP2. In Homo sapiens (Human), this protein is HOXB-AS3 peptide.